The chain runs to 522 residues: F-box-like/WD repeat-containing protein TBL1Y (522 aa).

N-acetylserine is present on S2. The LisH domain occupies 4–36 (TSDEVNFLVYRYLQESGFSHSAFTFGIESHISQ). The region spanning 41 to 86 (GTLVPPSALISILQKGLQYVEAEISINKDGTVFDSRPIESLSLIVA) is the F-box-like domain. K102 is modified (N6-acetyllysine). The residue at position 130 (S130) is a Phosphoserine. 8 WD repeats span residues 177–216 (GHES…NGGS), 233–272 (PSNK…ASTL), 274–313 (QHKG…AKQQ), 316–354 (FHSA…PVKT), 357–396 (GHTN…CVHD), 399–447 (AHSK…CTHT), 450–489 (KHQE…LVHS), and 491–521 (QGTG…CVLD). K287 is covalently cross-linked (Glycyl lysine isopeptide (Lys-Gly) (interchain with G-Cter in SUMO2)).

It belongs to the WD repeat EBI family. In terms of assembly, probable component of the N-Cor repressor complex and some E3 ubiquitin ligase complex. Interacts with NCOR2. In terms of tissue distribution, fetal brain and prostate. Expressed in the cochlear spiral ganglion neurons, and in outer and inner hair cells.

It is found in the nucleus. F-box-like protein involved in the recruitment of the ubiquitin/19S proteasome complex to nuclear receptor-regulated transcription units. Plays an essential role in transcription activation mediated by nuclear receptors. Probably acts as integral component of corepressor complexes that mediates the recruitment of the 19S proteasome complex, leading to the subsequent proteasomal degradation of transcription repressor complexes, thereby allowing cofactor exchange. The polypeptide is F-box-like/WD repeat-containing protein TBL1Y (TBL1Y) (Homo sapiens (Human)).